Reading from the N-terminus, the 249-residue chain is Derlin-2.1 (249 aa).

Over 1 to 21 the chain is Cytoplasmic; the sequence is MAQAVEEWYRQMPIITRSYLT. Residues 22–42 traverse the membrane as a helical segment; sequence AAVVTTVGCTLEIISPYHLYL. Topologically, residues 43–96 are lumenal; the sequence is NPKLVVQHYEIWRLVTNFLYFRKMDLDFLFHMFFLARYCKLLEENSFRGRTADF. Residues 97–117 traverse the membrane as a helical segment; that stretch reads FYMLLFGATVLTSIVLIGGMI. The Cytoplasmic segment spans residues 118 to 122; it reads PYISE. The helical transmembrane segment at 123-143 threads the bilayer; it reads TFARILFLSNSLTFMMVYVWS. Residues 144 to 152 are Lumenal-facing; the sequence is KHNPFIHMS. Residues 153–173 traverse the membrane as a helical segment; the sequence is FLGLFTFTAAYLPWVLLGFSI. Over 174-249 the chain is Cytoplasmic; sequence LVGSSTWVDL…GAMGLDPQAQ (76 aa).

It belongs to the derlin family. In terms of tissue distribution, expressed in roots, stalks, leaves, embryo and endosperm.

It localises to the endoplasmic reticulum membrane. Its function is as follows. May be involved in the degradation process of specific misfolded endoplasmic reticulum (ER) luminal proteins. This Zea mays (Maize) protein is Derlin-2.1 (DER2.1).